Here is a 268-residue protein sequence, read N- to C-terminus: Forkhead box protein R1 (268 aa).

A disordered region spans residues 91-126 (EDSCSEASEVQQPLPPCRQKRKQRRSTVPLPLAPGR). The segment at residues 149–248 (RPPLHYFHLI…KEARTLASTQ (100 aa)) is a DNA-binding region (fork-head).

As to expression, expressed in adult germ cells (at protein level). Expressed in heart, liver, lung and embryonic brain.

The protein localises to the nucleus. Its subcellular location is the cytoplasm. It is found in the perinuclear region. Its function is as follows. Transcription factor which acts as both an activator and a repressor. Activates transcription of a number of genes including the heat shock chaperones HSPA1A and HSPA6 and the antioxidant NADPH-dependent reductase DHRS2 which are involved in protection against oxidative stress. Required for normal brain development. The sequence is that of Forkhead box protein R1 (Foxr1) from Mus musculus (Mouse).